A 243-amino-acid chain; its full sequence is MNTSQDTIYAQPNEHISDFQFDNRVAGVFSDMIRRSVPGYTQIINTIGDFADRFVMPNTQIYDLGCSLGAATLSIRRQIQGRQCRIIAVDNSESMVARCQENLNAYVSDTDVDLVCGDIRDIDIQNASLVVLNFTLQFLPPEDRETLIAKIYQGLNPGGILVLSEKIRFEDAPIQTLLEEQHLDFKRANGYSELEISQKRSALENVMKPDTLTTHQQRLTSQGFSHFSLWFQCFNFASMVAIK.

Residues Tyr40, 65–67 (GCS), 90–91 (DN), 118–119 (DI), Asn133, and Arg200 contribute to the S-adenosyl-L-methionine site.

Belongs to the class I-like SAM-binding methyltransferase superfamily. Cx-SAM synthase family. As to quaternary structure, homodimer.

The enzyme catalyses prephenate + S-adenosyl-L-methionine = carboxy-S-adenosyl-L-methionine + 3-phenylpyruvate + H2O. Functionally, catalyzes the conversion of S-adenosyl-L-methionine (SAM) to carboxy-S-adenosyl-L-methionine (Cx-SAM). The sequence is that of Carboxy-S-adenosyl-L-methionine synthase from Shewanella putrefaciens (strain CN-32 / ATCC BAA-453).